The sequence spans 695 residues: DNA ligase (695 aa).

30-34 (DADFD) lines the NAD(+) pocket. Positions 52-71 (TGASPTEEVAPAPPTSSPFR) are disordered. Residues 81 to 82 (SL) and Glu-106 each bind NAD(+). The active-site N6-AMP-lysine intermediate is Lys-108. 4 residues coordinate NAD(+): Arg-129, Glu-169, Lys-285, and Lys-309. Zn(2+) is bound by residues Cys-403, Cys-406, Cys-422, and Cys-428. A BRCT domain is found at 599–688 (VDSALLEGLT…APSSGDDAST (90 aa)). Residues 676–695 (ENGAPSSGDDASTSADSVDD) form a disordered region. Residues 679–695 (APSSGDDASTSADSVDD) show a composition bias toward low complexity.

This sequence belongs to the NAD-dependent DNA ligase family. LigA subfamily. It depends on Mg(2+) as a cofactor. Requires Mn(2+) as cofactor.

It carries out the reaction NAD(+) + (deoxyribonucleotide)n-3'-hydroxyl + 5'-phospho-(deoxyribonucleotide)m = (deoxyribonucleotide)n+m + AMP + beta-nicotinamide D-nucleotide.. In terms of biological role, DNA ligase that catalyzes the formation of phosphodiester linkages between 5'-phosphoryl and 3'-hydroxyl groups in double-stranded DNA using NAD as a coenzyme and as the energy source for the reaction. It is essential for DNA replication and repair of damaged DNA. This chain is DNA ligase, found in Corynebacterium jeikeium (strain K411).